The primary structure comprises 430 residues: Glutamate-1-semialdehyde 2,1-aminomutase (430 aa).

K267 is modified (N6-(pyridoxal phosphate)lysine).

It belongs to the class-III pyridoxal-phosphate-dependent aminotransferase family. HemL subfamily. As to quaternary structure, homodimer. Pyridoxal 5'-phosphate is required as a cofactor.

Its subcellular location is the cytoplasm. The catalysed reaction is (S)-4-amino-5-oxopentanoate = 5-aminolevulinate. Its pathway is porphyrin-containing compound metabolism; protoporphyrin-IX biosynthesis; 5-aminolevulinate from L-glutamyl-tRNA(Glu): step 2/2. In Natranaerobius thermophilus (strain ATCC BAA-1301 / DSM 18059 / JW/NM-WN-LF), this protein is Glutamate-1-semialdehyde 2,1-aminomutase.